The chain runs to 338 residues: MKIIYPEELKQKLIKKLNYFYILLGEDSILLSKAEQLIFYFAKDKKFIEKNTINIEKSTDWNKVINFHKSKNLFFKKTILIINFTIKKLNLSLVKNINKIPLFKNKDILTVIKLNALSSLIKKSTILKILILESEIIYCSTPYEWAFKKWLQYEIKTRNLKITQESFLLLHKYYEGNTLCLNQILDILSITWPNENIKIEKIKKIINQFSIFSPVNWINAIFNKNKKKAIYILDSFFKQKYNPLILIRTLQKDLLILLNMKREKKLNINFFLKKNNISLNRSKFFANALYYIDFNNFLKIIRILLQIEIKIKKEYNNSVWIQLKTLTLLLSSPMKYTP.

The protein belongs to the DNA polymerase HolA subunit family. In terms of assembly, DNA polymerase III contains a core (composed of alpha, epsilon and theta chains) that associates with a tau subunit. This core dimerizes to form the POLIII' complex. PolIII' associates with the gamma complex (composed of gamma, delta, delta', psi and chi chains) and with the beta chain to form the complete DNA polymerase III complex.

The enzyme catalyses DNA(n) + a 2'-deoxyribonucleoside 5'-triphosphate = DNA(n+1) + diphosphate. DNA polymerase III is a complex, multichain enzyme responsible for most of the replicative synthesis in bacteria. This DNA polymerase also exhibits 3' to 5' exonuclease activity. The delta subunit seems to interact with the gamma subunit to transfer the beta subunit on the DNA. This chain is DNA polymerase III subunit delta (holA), found in Buchnera aphidicola subsp. Schizaphis graminum (strain Sg).